We begin with the raw amino-acid sequence, 354 residues long: Protein Wnt-11 (354 aa).

Residues 1 to 23 (MTEYRNFLLLFITSLSVIYPCTG) form the signal peptide. Residues Asn32, Asn39, and Asn89 are each glycosylated (N-linked (GlcNAc...) asparagine). Disulfide bonds link Cys129–Cys137, Cys139–Cys156, Cys209–Cys223, Cys211–Cys218, Cys283–Cys314, Cys299–Cys309, Cys329–Cys344, Cys331–Cys341, and Cys336–Cys337. Residue Ser215 is the site of O-palmitoleoyl serine; by PORCN attachment. An N-linked (GlcNAc...) asparagine glycan is attached at Asn300.

Belongs to the Wnt family. Post-translationally, palmitoleoylation is required for efficient binding to frizzled receptors. Depalmitoleoylation leads to Wnt signaling pathway inhibition.

It localises to the secreted. The protein resides in the extracellular space. The protein localises to the extracellular matrix. In terms of biological role, ligand for fzd5, a member of the G-protein coupled frizzled receptor family. Plays a role in early eye development, possibly through wnt non-canonical signaling. Promotes eye formation, at least partially, by antagonizing the Wnt/beta-catenin pathway. In addition, promotes coherence of eye field cells, potentially contributing to the coordinated morphogenetic behaviors of cells in the nascent eye field. The polypeptide is Protein Wnt-11 (wnt11) (Danio rerio (Zebrafish)).